Here is a 163-residue protein sequence, read N- to C-terminus: Nucleotide-binding protein Cla_1551 (163 aa).

Belongs to the YajQ family.

Its function is as follows. Nucleotide-binding protein. This Campylobacter lari (strain RM2100 / D67 / ATCC BAA-1060) protein is Nucleotide-binding protein Cla_1551.